The following is a 335-amino-acid chain: MWAVLPLLCAGAWLLGAPACGAAELAANSLEKFHFQSWMVQHQKKYSSEEYYHRLQAFASNLREINAHNARNHTFKMGLNQFSDMSFDELKRKYLWSEPQNCSATKSNYLRGTGPYPPSMDWRKKGNFVTPVKNQGSCGSCWTFSTTGALESAVAIATGKLPFLAEQQLVDCAQNFNNHGCQGGLPSQAFEYIRYNKGIMGEDTYPYRGQDGDCKYQPSKAIAFVKDVANITLNDEEAMVEAVALHNPVSFAFEVTADFMMYRKGIYSSTSCHKTPDKVNHAVLAVGYGEEKGIPYWIVKNSWGPNWGMKGYFLIERGKNMCGLAACASFPIPLV.

The first 22 residues, 1 to 22 (MWAVLPLLCAGAWLLGAPACGA), serve as a signal peptide directing secretion. A propeptide spans 23–97 (AELAANSLEK…DELKRKYLWS (75 aa)) (activation peptide). Residues Asn-72 and Asn-101 are each glycosylated (N-linked (GlcNAc...) asparagine). 4 disulfides stabilise this stretch: Cys-102–Cys-327, Cys-138–Cys-181, Cys-172–Cys-214, and Cys-272–Cys-322. The propeptide occupies 106–115 (KSNYLRGTGP). Residue Cys-141 is part of the active site. Asn-230 carries an N-linked (GlcNAc...) asparagine glycan. Active-site residues include His-281 and Asn-301.

It belongs to the peptidase C1 family. In terms of assembly, composed of a mini chain and a large chain. The large chain may be split into heavy and light chain. All chains are held together by disulfide bonds.

It is found in the lysosome. It carries out the reaction Hydrolysis of proteins, acting as an aminopeptidase (notably, cleaving Arg-|-Xaa bonds) as well as an endopeptidase.. Functionally, important for the overall degradation of proteins in lysosomes. The chain is Pro-cathepsin H (CTSH) from Bos taurus (Bovine).